Consider the following 381-residue polypeptide: D-rhamnosyltransferase WbpZ (381 aa).

E19, H116, K206, and V252 together coordinate substrate.

The protein belongs to the glycosyltransferase group 1 family. Glycosyltransferase 4 subfamily.

The protein resides in the cytoplasm. The enzyme catalyses GDP-alpha-D-rhamnose + N-acetyl-alpha-D-glucosaminyl-di-trans,octa-cis-undecaprenyl diphosphate = alpha-D-rhamnosyl-(1-&gt;3)-N-acetyl-alpha-D-glucosaminyl-1-diphospho-di-trans,octa-cis-undecaprenol + GDP + H(+). It catalyses the reaction GDP-alpha-D-rhamnose + N-acetyl-alpha-D-galactosaminyl-di-trans,octa-cis-undecaprenyl diphosphate = alpha-D-rhamnosyl-(1-&gt;3)-N-acetyl-alpha-D-galactosaminyl-1-diphospho-di-trans,octa-cis-undecaprenol + GDP + H(+). It carries out the reaction N-acetyl-alpha-D-glucosaminyl-di-trans,octa-cis-undecaprenyl diphosphate + GDP-alpha-D-mannose = alpha-D-mannosyl-(1-&gt;3)-N-acetyl-alpha-D-glucosaminyl-di-trans,octa-cis-undecaprenyl diphosphate + GDP + H(+). The catalysed reaction is N-acetyl-alpha-D-galactosaminyl-di-trans,octa-cis-undecaprenyl diphosphate + GDP-alpha-D-mannose = alpha-D-mannosyl-(1-&gt;3)-N-acetyl-alpha-D-galctosaminyl-1-diphospho-di-trans,octa-cis-undecaprenol + GDP + H(+). The protein operates within lipopolysaccharide biosynthesis; LPS oligosaccharide biosynthesis. With respect to regulation, not activated by dithiothreitol (DTT) using GlcNAc-alpha-PO(3)-PO(3)-phenylundecyl (GlcNAc-PP-PhU) as acceptor substrate. 0.25% Triton X-100 and 0.125% NP-40 increases the activity 2.5-fold and 2-fold, respectively. 0.125% octyl glucoside has little effect on activity. Slightly increased activity with Mg(2+) and Pb(2+), while no effect with Mn(2+), Co(2+), Ni(2+), Cu(2+), Zn(2+), Ca(2+) or EDTA. Not inhibited by N-butyryl-galactosamine-alpha-benzyl or N-butyryl-glucosamine-beta-benzyl. Bis-imidazolium salts having aliphatic spacer groups with 4 or 6 carbons have little effect on activity, but spacer groups of 18-22 aliphatic carbons inhibit activity, with the most potent inhibitor being bis-imidazolium salt having a 20-carbon chain spacer length. Non-processive alpha-1,3-D-rhamnosyltransferase. Catalyzes the transfer of one D-rhamnose (D-Rha) residue from donor substrate GDP-D-Rha in alpha-1-3 linkage to both GlcNAc- and GalNAc-diphosphate-lipid acceptor substrates. Is also able to transfer D-mannose (D-Man) to these acceptors at a lower level. Nucleotide sugars GDP-D-Rha, GDP-Fuc, UDP-Gal, UDP-GalNAc, UDP-GlcNAc and CMP-sialic acid cannot act as donor substrates. Only compounds with a diphosphate as the aglycone group can act as acceptor substrates. No activity is detected with compounds containing a diphosphate mimic. Fluorescent undecyl-anthracenyl group-containing compounds, such as GlcNAc-PO(3)-PO(3)-AnthrU and GalNAc-PO(3)-PO(3)-AnthrU, are also good acceptor substrates. Involved in the biosynthesis of the common polysaccharide antigen (CPA), also called A band, which is one of the two major cell surface O-antigens of the P.aeruginosa lipopolysaccharide. Involved in susceptibility to antibiotic colistin. The protein is D-rhamnosyltransferase WbpZ of Pseudomonas aeruginosa (strain ATCC 15692 / DSM 22644 / CIP 104116 / JCM 14847 / LMG 12228 / 1C / PRS 101 / PAO1).